The primary structure comprises 95 residues: Co-chaperonin GroES (95 aa).

This sequence belongs to the GroES chaperonin family. In terms of assembly, heptamer of 7 subunits arranged in a ring. Interacts with the chaperonin GroEL.

The protein localises to the cytoplasm. Together with the chaperonin GroEL, plays an essential role in assisting protein folding. The GroEL-GroES system forms a nano-cage that allows encapsulation of the non-native substrate proteins and provides a physical environment optimized to promote and accelerate protein folding. GroES binds to the apical surface of the GroEL ring, thereby capping the opening of the GroEL channel. The protein is Co-chaperonin GroES of Methylocella silvestris (strain DSM 15510 / CIP 108128 / LMG 27833 / NCIMB 13906 / BL2).